Reading from the N-terminus, the 227-residue chain is Ribose-5-phosphate isomerase A (227 aa).

Substrate-binding positions include 26–29 (TGST), 82–85 (DGAD), and 95–98 (KGGG). Catalysis depends on glutamate 104, which acts as the Proton acceptor. Lysine 122 provides a ligand contact to substrate.

The protein belongs to the ribose 5-phosphate isomerase family. Homodimer.

It carries out the reaction aldehydo-D-ribose 5-phosphate = D-ribulose 5-phosphate. It functions in the pathway carbohydrate degradation; pentose phosphate pathway; D-ribose 5-phosphate from D-ribulose 5-phosphate (non-oxidative stage): step 1/1. Functionally, catalyzes the reversible conversion of ribose-5-phosphate to ribulose 5-phosphate. The polypeptide is Ribose-5-phosphate isomerase A (Streptococcus pneumoniae (strain Hungary19A-6)).